A 346-amino-acid chain; its full sequence is Glycerol-3-phosphate dehydrogenase [NAD(P)+] (346 aa).

Ser15, Trp16, Arg36, and Lys110 together coordinate NADPH. 3 residues coordinate sn-glycerol 3-phosphate: Lys110, Gly139, and Ser141. Residue Ala143 participates in NADPH binding. Lys194, Asp247, Ser257, Arg258, and Asn259 together coordinate sn-glycerol 3-phosphate. Lys194 acts as the Proton acceptor in catalysis. Arg258 lines the NADPH pocket. Residues Val282 and Glu284 each coordinate NADPH.

It belongs to the NAD-dependent glycerol-3-phosphate dehydrogenase family.

It is found in the cytoplasm. The catalysed reaction is sn-glycerol 3-phosphate + NAD(+) = dihydroxyacetone phosphate + NADH + H(+). The enzyme catalyses sn-glycerol 3-phosphate + NADP(+) = dihydroxyacetone phosphate + NADPH + H(+). The protein operates within membrane lipid metabolism; glycerophospholipid metabolism. Catalyzes the reduction of the glycolytic intermediate dihydroxyacetone phosphate (DHAP) to sn-glycerol 3-phosphate (G3P), the key precursor for phospholipid synthesis. This chain is Glycerol-3-phosphate dehydrogenase [NAD(P)+], found in Xylella fastidiosa (strain Temecula1 / ATCC 700964).